Reading from the N-terminus, the 208-residue chain is MIIIKDAHFITSSSQLSQCPASLTSEMVVLGRSNVGKSSFINTLLGKNLAKSSSTPGKTRLANFFSTTWEDKKNALTTTFSVIDLPGFGYAKVSKSLKKEWEGFLWELLSVRTSIKLFIHLIDARHLNLEIDKNAKENIQTLLRSDQAYLSLFTKFDKLNKNEQHRLFLNAPKPFLINTTHFNALSSKYPTLEIVRQTLLKYLLTNPL.

The EngB-type G domain occupies Leu-23–Thr-205. GTP-binding positions include Gly-31–Ser-38, Gly-57–Leu-61, Asp-84–Gly-87, Thr-154–Asp-157, and Phe-182–Ala-184. Residues Ser-38 and Thr-59 each coordinate Mg(2+).

Belongs to the TRAFAC class TrmE-Era-EngA-EngB-Septin-like GTPase superfamily. EngB GTPase family. Requires Mg(2+) as cofactor.

Its function is as follows. Necessary for normal cell division and for the maintenance of normal septation. The chain is Probable GTP-binding protein EngB from Helicobacter acinonychis (strain Sheeba).